Consider the following 365-residue polypeptide: Aminomethyltransferase (365 aa).

The protein belongs to the GcvT family. As to quaternary structure, the glycine cleavage system is composed of four proteins: P, T, L and H.

The enzyme catalyses N(6)-[(R)-S(8)-aminomethyldihydrolipoyl]-L-lysyl-[protein] + (6S)-5,6,7,8-tetrahydrofolate = N(6)-[(R)-dihydrolipoyl]-L-lysyl-[protein] + (6R)-5,10-methylene-5,6,7,8-tetrahydrofolate + NH4(+). In terms of biological role, the glycine cleavage system catalyzes the degradation of glycine. This Parafrankia sp. (strain EAN1pec) protein is Aminomethyltransferase.